The primary structure comprises 93 residues: Phosphoribosyl-ATP pyrophosphatase (93 aa).

The protein belongs to the PRA-PH family.

The protein resides in the cytoplasm. It carries out the reaction 1-(5-phospho-beta-D-ribosyl)-ATP + H2O = 1-(5-phospho-beta-D-ribosyl)-5'-AMP + diphosphate + H(+). The protein operates within amino-acid biosynthesis; L-histidine biosynthesis; L-histidine from 5-phospho-alpha-D-ribose 1-diphosphate: step 2/9. This is Phosphoribosyl-ATP pyrophosphatase from Mycobacterium avium (strain 104).